Here is a 402-residue protein sequence, read N- to C-terminus: S-adenosylmethionine synthase (402 aa).

140–145 lines the ATP pocket; that stretch reads GNGSID.

This sequence belongs to the AdoMet synthase 2 family. Mg(2+) serves as cofactor.

It carries out the reaction L-methionine + ATP + H2O = S-adenosyl-L-methionine + phosphate + diphosphate. It participates in amino-acid biosynthesis; S-adenosyl-L-methionine biosynthesis; S-adenosyl-L-methionine from L-methionine: step 1/1. Catalyzes the formation of S-adenosylmethionine from methionine and ATP. The sequence is that of S-adenosylmethionine synthase from Picrophilus torridus (strain ATCC 700027 / DSM 9790 / JCM 10055 / NBRC 100828 / KAW 2/3).